The following is a 210-amino-acid chain: Ras-related protein RABC2a (210 aa).

20–27 (GDSGVGKS) contributes to the GTP binding site. The short motif at 41–49 (LAPTIGVDF) is the Effector region element. GTP is bound by residues 67 to 71 (DTAGQ), 127 to 130 (NKVD), and 157 to 158 (SA). Residues Cys-208 and Cys-209 are each lipidated (S-geranylgeranyl cysteine).

It belongs to the small GTPase superfamily. Rab family. Interacts with XI-2/MYA2.

The protein localises to the cell membrane. It localises to the cytoplasm. In terms of biological role, intracellular vesicle trafficking and protein transport. In Arabidopsis thaliana (Mouse-ear cress), this protein is Ras-related protein RABC2a (RABC2A).